A 246-amino-acid polypeptide reads, in one-letter code: tRNA pseudouridine synthase A (246 aa).

Asp52 acts as the Nucleophile in catalysis. A substrate-binding site is contributed by Tyr111.

Belongs to the tRNA pseudouridine synthase TruA family. In terms of assembly, homodimer.

The enzyme catalyses uridine(38/39/40) in tRNA = pseudouridine(38/39/40) in tRNA. Functionally, formation of pseudouridine at positions 38, 39 and 40 in the anticodon stem and loop of transfer RNAs. The polypeptide is tRNA pseudouridine synthase A (Borreliella burgdorferi (strain ZS7) (Borrelia burgdorferi)).